Reading from the N-terminus, the 96-residue chain is MATPQRLTDPEIQTALGELGGWSLQGNKLHRQFKFANFNQAFGFMTRLALVAETLNHHPEWSNVYNRVTIDLTTHDAGGITELDVKFATKANSFAD.

This sequence belongs to the pterin-4-alpha-carbinolamine dehydratase family.

It catalyses the reaction (4aS,6R)-4a-hydroxy-L-erythro-5,6,7,8-tetrahydrobiopterin = (6R)-L-erythro-6,7-dihydrobiopterin + H2O. The polypeptide is Putative pterin-4-alpha-carbinolamine dehydratase (Synechocystis sp. (strain ATCC 27184 / PCC 6803 / Kazusa)).